Reading from the N-terminus, the 894-residue chain is Low-affinity phosphate transporter PHO91 (894 aa).

An SPX domain is found at 1–256; sequence MKFSHSLQFN…NTNLKQNYLN (256 aa). Disordered stretches follow at residues 124–160 and 293–321; these read QHQL…LTDM and RPSN…EDGN. Basic residues predominate over residues 132 to 144; that stretch reads RNRKSKSQQRQRR. Residues 151 to 160 show a composition bias toward polar residues; it reads TDSNPSLTDM. A phosphoserine mark is found at Ser-295, Ser-311, and Ser-312. The next 13 membrane-spanning stretches (helical) occupy residues 430–450, 474–494, 511–531, 557–577, 602–622, 642–662, 682–702, 706–726, 738–758, 777–797, 799–819, 824–844, and 874–894; these read LKFL…LTPF, TIPL…FPVI, FILS…FTLA, FILL…SNVA, ALIL…PIAS, FMIA…LLII, FTLK…LWCL, ISGI…VFFG, FMWT…AVSS, PIFI…TFVS, TVAA…LPSG, LLIV…TSGF, and SLLS…VMGF.

This sequence belongs to the CitM (TC 2.A.11) transporter family. Ubiquitinated by RSP5. RSP5-mediated ubiquitination initiates internalization and degradation by the endocytic pathway.

It is found in the vacuole membrane. Its function is as follows. Vacuolar phosphate transporter that probably exports phosphate from the vacuolar lumen to the cytosol. This chain is Low-affinity phosphate transporter PHO91 (PHO91), found in Saccharomyces cerevisiae (strain ATCC 204508 / S288c) (Baker's yeast).